Here is a 471-residue protein sequence, read N- to C-terminus: ATP synthase subunit beta (471 aa).

Gly-156–Thr-163 serves as a coordination point for ATP.

The protein belongs to the ATPase alpha/beta chains family. In terms of assembly, F-type ATPases have 2 components, CF(1) - the catalytic core - and CF(0) - the membrane proton channel. CF(1) has five subunits: alpha(3), beta(3), gamma(1), delta(1), epsilon(1). CF(0) has three main subunits: a(1), b(2) and c(9-12). The alpha and beta chains form an alternating ring which encloses part of the gamma chain. CF(1) is attached to CF(0) by a central stalk formed by the gamma and epsilon chains, while a peripheral stalk is formed by the delta and b chains.

It localises to the cell membrane. It catalyses the reaction ATP + H2O + 4 H(+)(in) = ADP + phosphate + 5 H(+)(out). Functionally, produces ATP from ADP in the presence of a proton gradient across the membrane. The catalytic sites are hosted primarily by the beta subunits. This is ATP synthase subunit beta from Lysinibacillus sphaericus (strain C3-41).